The chain runs to 155 residues: Protein FAM162B (155 aa).

A helical transmembrane segment spans residues 95–114; it reads VKACYIMMGLTIFACLVMIV.

It belongs to the UPF0389 family.

It localises to the membrane. The chain is Protein FAM162B (fam162b) from Danio rerio (Zebrafish).